The following is a 1143-amino-acid chain: Disease resistance protein Pikm1-TS (1143 aa).

The structured coiled coil (CC) domain stretch occupies residues 1 to 190; sequence MEAAAMAVTA…PLRIMGGEMQ (190 aa). The HMA domain maps to 189–258; sequence MQKIVFKIPM…KVGPAMFLEV (70 aa). The segment at 191 to 264 is HMA-like domain; it reads KIVFKIPMVD…FLEVSQVKED (74 aa). The NB-ARC domain maps to 282-570; sequence HEVKTICILG…WIAEGFVSEE (289 aa). LRR repeat units lie at residues 681-706, 708-731, 732-754, 756-777, 778-800, 802-823, 824-848, 945-968, 979-1002, and 1004-1027; these read FKRL…ICEQ, SLRV…MRKL, KHLE…IGEL, HLRI…IREL, QHLH…VGKL, NLKI…IGEL, NHLQ…QISQ, MPNL…INGT, DSRV…EFKF, and AGPA…VFRC.

This sequence belongs to the disease resistance NB-LRR family. In terms of assembly, interacts with AVR-Pik through its N-terminal part containing the HMA-like domain. Constitutively expressed.

Its function is as follows. Disease resistance (R) protein that specifically recognizes the AVR-Pik effector avirulence protein from M.oryzae. Resistance proteins guard the plant against pathogens that contain an appropriate avirulence protein via an indirect interaction with this avirulence protein. That triggers a defense system including the hypersensitive response, which restricts the pathogen growth. Contribution of Pikm-2 is required to recognize the effector avirulence protein AVR-Pik. The protein is Disease resistance protein Pikm1-TS of Oryza sativa subsp. japonica (Rice).